Here is a 754-residue protein sequence, read N- to C-terminus: 5-methyltetrahydropteroyltriglutamate--homocysteine methyltransferase (754 aa).

5-methyltetrahydropteroyltri-L-glutamate-binding positions include 17–20 and K117; that span reads RELK. L-homocysteine is bound by residues 431-433 and E484; that span reads IGS. Residues 431–433 and E484 contribute to the L-methionine site; that span reads IGS. Residues 515–516 and W561 each bind 5-methyltetrahydropteroyltri-L-glutamate; that span reads RC. Position 599 (D599) interacts with L-homocysteine. D599 contacts L-methionine. E605 serves as a coordination point for 5-methyltetrahydropteroyltri-L-glutamate. Positions 641, 643, and 665 each coordinate Zn(2+). H694 acts as the Proton donor in catalysis. Residue C726 coordinates Zn(2+).

Belongs to the vitamin-B12 independent methionine synthase family. Zn(2+) is required as a cofactor.

It catalyses the reaction 5-methyltetrahydropteroyltri-L-glutamate + L-homocysteine = tetrahydropteroyltri-L-glutamate + L-methionine. It functions in the pathway amino-acid biosynthesis; L-methionine biosynthesis via de novo pathway; L-methionine from L-homocysteine (MetE route): step 1/1. In terms of biological role, catalyzes the transfer of a methyl group from 5-methyltetrahydrofolate to homocysteine resulting in methionine formation. This chain is 5-methyltetrahydropteroyltriglutamate--homocysteine methyltransferase, found in Salmonella typhimurium (strain LT2 / SGSC1412 / ATCC 700720).